A 546-amino-acid chain; its full sequence is MPDRTGPLLRTPAWRALEAHLAELQPLHLRELFARDPGRGERLVADGAGLHLDYSKQRVTEETVRLLAALAEARGLPERRAAMFRGEKVNVTEGRAVLHVALRAPRGERILVDGSDVVPEVHAVLDRMAAFADQVRSGAWTGFTGKRIRTVVNVGIGGSDLGPAMAYRALRAYATRDLAFRFVSNVDGTDLAEAVRDLDPAETLFLVASKTFTTLETMTNAASARSWLLAALGDPRAVARHFVAISTNEAEVRRFGIDPANMFGFWDWVGGRYSMDSAIGLSTMIAVGPEGFRELLAGFREMDEHFRDAPLERNLPALIGLLGVWNANLLGAETVAVLPYDQYLDRFPAYLQQLTMESNGKRVTASGAPVEGHGTGAIYWGEPGTNGQHSFYQLLHQGTHLVACDFIGFCRPLHALARHHDLLMANLFAQGEALAFGKTAEEARAEGTPEPLVPHRTFPGNRPSSTILADRLTPRTLGALVALYEHAVFTQGVIWDVDSFDQWGVELGKVLANRIVKELESPAEPALAHDGSTNALIRRYRARRGG.

Glutamate 357 (proton donor) is an active-site residue. Catalysis depends on residues histidine 389 and lysine 509.

The protein belongs to the GPI family.

The protein resides in the cytoplasm. It catalyses the reaction alpha-D-glucose 6-phosphate = beta-D-fructose 6-phosphate. The protein operates within carbohydrate biosynthesis; gluconeogenesis. It functions in the pathway carbohydrate degradation; glycolysis; D-glyceraldehyde 3-phosphate and glycerone phosphate from D-glucose: step 2/4. Its function is as follows. Catalyzes the reversible isomerization of glucose-6-phosphate to fructose-6-phosphate. The protein is Glucose-6-phosphate isomerase of Anaeromyxobacter sp. (strain K).